A 431-amino-acid chain; its full sequence is Gamma-glutamyl phosphate reductase (431 aa).

It belongs to the gamma-glutamyl phosphate reductase family.

The protein localises to the cytoplasm. It catalyses the reaction L-glutamate 5-semialdehyde + phosphate + NADP(+) = L-glutamyl 5-phosphate + NADPH + H(+). It participates in amino-acid biosynthesis; L-proline biosynthesis; L-glutamate 5-semialdehyde from L-glutamate: step 2/2. Catalyzes the NADPH-dependent reduction of L-glutamate 5-phosphate into L-glutamate 5-semialdehyde and phosphate. The product spontaneously undergoes cyclization to form 1-pyrroline-5-carboxylate. In Bifidobacterium longum subsp. infantis (strain ATCC 15697 / DSM 20088 / JCM 1222 / NCTC 11817 / S12), this protein is Gamma-glutamyl phosphate reductase.